We begin with the raw amino-acid sequence, 137 residues long: 2-iminobutanoate/2-iminopropanoate deaminase (137 aa).

Ser-2 is subject to N-acetylserine. N6-succinyllysine is present on residues Lys-13, Lys-60, and Lys-67. Thr-74 is modified (phosphothreonine). Ser-136 is modified (phosphoserine).

The protein belongs to the RutC family. In terms of assembly, homotrimer. Interacts with YTHDF2. Expressed predominantly in liver and kidney. Lower levels in lung and brain.

It localises to the cytoplasm. The protein resides in the nucleus. Its subcellular location is the peroxisome. The protein localises to the mitochondrion. The catalysed reaction is 2-iminobutanoate + H2O = 2-oxobutanoate + NH4(+). It carries out the reaction 2-iminopropanoate + H2O = pyruvate + NH4(+). Its function is as follows. Catalyzes the hydrolytic deamination of enamine/imine intermediates that form during the course of normal metabolism. May facilitate the release of ammonia from these potentially toxic reactive metabolites, reducing their impact on cellular components. It may act on enamine/imine intermediates formed by several types of pyridoxal-5'-phosphate-dependent dehydratases including L-threonine dehydratase. In terms of biological role, also promotes endoribonucleolytic cleavage of some transcripts by promoting recruitment of the ribonuclease P/MRP complex. Acts by bridging YTHDF2 and the ribonuclease P/MRP complex. RIDA/HRSP12 binds to N6-methyladenosine (m6A)-containing mRNAs containing a 5'-GGUUC-3' motif: cooperative binding of RIDA/HRSP12 and YTHDF2 to such transcripts lead to recruitment of the ribonuclease P/MRP complex and subsequent endoribonucleolytic cleavage. The chain is 2-iminobutanoate/2-iminopropanoate deaminase from Homo sapiens (Human).